Consider the following 54-residue polypeptide: MASKERQTILLACTECKNKNYYYARGKKKEFKLELNKFCKACGKSTKHKEGKAN.

The protein belongs to the bacterial ribosomal protein bL33 family.

The polypeptide is Large ribosomal subunit protein bL33 (Elusimicrobium minutum (strain Pei191)).